We begin with the raw amino-acid sequence, 210 residues long: Thioredoxin-like 3-1, chloroplastic (210 aa).

The Thioredoxin domain occupies 81-210 (WRLKAFWSNI…EVRELINKFV (130 aa)). Catalysis depends on nucleophile residues Cys130 and Cys133. A disulfide bridge connects residues Cys130 and Cys133.

This sequence belongs to the thioredoxin family.

The protein localises to the plastid. The protein resides in the chloroplast stroma. Its function is as follows. Probable thiol-disulfide oxidoreductase that may participate in various redox reactions. The polypeptide is Thioredoxin-like 3-1, chloroplastic (WCRKC1) (Arabidopsis thaliana (Mouse-ear cress)).